The sequence spans 515 residues: Maturase K (515 aa).

It belongs to the intron maturase 2 family. MatK subfamily.

The protein localises to the plastid. The protein resides in the chloroplast. Functionally, usually encoded in the trnK tRNA gene intron. Probably assists in splicing its own and other chloroplast group II introns. The sequence is that of Maturase K from Pinus yunnanensis (Yunnan pine).